The chain runs to 422 residues: Histidine--tRNA ligase (422 aa).

This sequence belongs to the class-II aminoacyl-tRNA synthetase family. In terms of assembly, homodimer.

Its subcellular location is the cytoplasm. It catalyses the reaction tRNA(His) + L-histidine + ATP = L-histidyl-tRNA(His) + AMP + diphosphate + H(+). The polypeptide is Histidine--tRNA ligase (Nocardia farcinica (strain IFM 10152)).